Reading from the N-terminus, the 622-residue chain is uncharacterized protein (622 aa).

A compositionally biased stretch (basic and acidic residues) spans Leu157–Gln166. Residues Leu157–Glu238 are disordered.

This is an uncharacterized protein from Homo sapiens (Human).